A 338-amino-acid chain; its full sequence is NADH-quinone oxidoreductase subunit H (338 aa).

The next 8 membrane-spanning stretches (helical) occupy residues 22–42 (VVQA…MSFI), 96–116 (VAMA…ALGV), 121–141 (IGLL…LFGG), 161–181 (ISYE…AGSF), 193–213 (VWFI…GVAV), 249–269 (YVNV…GWLA), 277–297 (FVPP…MFVL), and 315–335 (WKIC…VILM).

This sequence belongs to the complex I subunit 1 family. In terms of assembly, NDH-1 is composed of 14 different subunits. Subunits NuoA, H, J, K, L, M, N constitute the membrane sector of the complex.

Its subcellular location is the cell inner membrane. The catalysed reaction is a quinone + NADH + 5 H(+)(in) = a quinol + NAD(+) + 4 H(+)(out). NDH-1 shuttles electrons from NADH, via FMN and iron-sulfur (Fe-S) centers, to quinones in the respiratory chain. The immediate electron acceptor for the enzyme in this species is believed to be ubiquinone. Couples the redox reaction to proton translocation (for every two electrons transferred, four hydrogen ions are translocated across the cytoplasmic membrane), and thus conserves the redox energy in a proton gradient. This subunit may bind ubiquinone. The sequence is that of NADH-quinone oxidoreductase subunit H from Acinetobacter baumannii (strain ATCC 17978 / DSM 105126 / CIP 53.77 / LMG 1025 / NCDC KC755 / 5377).